The following is a 678-amino-acid chain: Nucleolar protein 9 (678 aa).

Residues 1 to 15 show a composition bias toward basic residues; the sequence is MPRDKQKRGRRAEAK. A disordered region spans residues 1–24; sequence MPRDKQKRGRRAEAKRKRDDVITD. Pumilio repeat units lie at residues 108 to 143, 291 to 334, and 382 to 419; these read EANG…RLFS, GLDN…SLLR, and KILV…SAMD. A disordered region spans residues 477–496; that stretch reads QRSNQESDGTTSSSNTSSPE. 2 Pumilio repeats span residues 524–562 and 563–600; these read AVTT…QITS and RFSG…RFAE.

It is found in the nucleus. The protein localises to the nucleolus. Functionally, RNA-binding nucleolar protein required for pre-rRNA processing. Involved in production of 18S rRNA and assembly of small ribosomal subunit. This Paracoccidioides brasiliensis (strain Pb18) protein is Nucleolar protein 9 (NOP9).